A 201-amino-acid polypeptide reads, in one-letter code: UPF0301 protein ROP_34500 (201 aa).

Belongs to the UPF0301 (AlgH) family.

In Rhodococcus opacus (strain B4), this protein is UPF0301 protein ROP_34500.